The sequence spans 332 residues: Palmitoyltransferase ZDHHC15B (332 aa).

Over 1 to 14 the chain is Cytoplasmic; sequence MALSRALRCCQRIF. Residues 15 to 35 traverse the membrane as a helical segment; the sequence is SWIPVIIISSVVLWSYYAYVF. The Lumenal portion of the chain corresponds to 36-50; sequence ELCFVTLSNNLERVT. Residues 51-71 traverse the membrane as a helical segment; the sequence is YLLIFHVCFIMFCWTYWKAIF. Residues 72–166 are Cytoplasmic-facing; sequence TPPSTPTKKF…NNCVGFSNYK (95 aa). In terms of domain architecture, DHHC spans 123-173; it reads RFCDRCQVIKPDRCHHCSVCETCVLKMDHHCPWVNNCVGFSNYKFFLLFLS. Cysteine 125 and cysteine 128 together coordinate Zn(2+). Lysine 132 is a substrate binding site. Zn(2+)-binding residues include histidine 138, cysteine 139, cysteine 142, cysteine 145, and histidine 152. Cysteine 153 acts as the S-palmitoyl cysteine intermediate in catalysis. Residue cysteine 159 coordinates Zn(2+). Residues 167–187 form a helical membrane-spanning segment; sequence FFLLFLSYSMIYCVFIASTVF. At 188 to 204 the chain is on the lumenal side; sequence QYFLKFWVGDLPNGPAK. The chain crosses the membrane as a helical span at residues 205-228; that stretch reads FHVLFLLFVALMFFVSLMFLFGYH. Topologically, residues 229–332 are cytoplasmic; that stretch reads CWLVAKNRST…GSSLLIRTES (104 aa). Positions 305–332 are disordered; it reads EEKWVEDGGSDEESADENGSSLLIRTES.

The protein belongs to the DHHC palmitoyltransferase family. Post-translationally, autopalmitoylated (in vitro).

The protein localises to the golgi apparatus membrane. It localises to the postsynaptic density. It carries out the reaction L-cysteinyl-[protein] + hexadecanoyl-CoA = S-hexadecanoyl-L-cysteinyl-[protein] + CoA. It catalyses the reaction L-cysteinyl-[protein] + tetradecanoyl-CoA = S-tetradecanoyl-L-cysteinyl-[protein] + CoA. The enzyme catalyses L-cysteinyl-[protein] + octadecanoyl-CoA = S-octadecanoyl-L-cysteinyl-[protein] + CoA. Palmitoyltransferase that catalyzes the addition of palmitate onto various protein substrates. Has no stringent fatty acid selectivity and in addition to palmitate can also transfer onto target proteins myristate from tetradecanoyl-CoA and stearate from octadecanoyl-CoA. May thereby regulate target proteins association and localization to membranes. In the nervous system, probably catalyzes the palmitoylation of synaptic proteins and is involved in the differentiation of dopaminergic neurons and the development of the diencephalon. In Danio rerio (Zebrafish), this protein is Palmitoyltransferase ZDHHC15B (zdhhc15b).